The chain runs to 173 residues: 2-C-methyl-D-erythritol 2,4-cyclodiphosphate synthase (173 aa).

The a divalent metal cation site is built by Asp-17 and His-19. 4-CDP-2-C-methyl-D-erythritol 2-phosphate contacts are provided by residues 17-19 (DVH) and 49-50 (HS). An a divalent metal cation-binding site is contributed by His-57. Residues 76–80 (FPNTD), 147–150 (TTTE), and Arg-157 contribute to the 4-CDP-2-C-methyl-D-erythritol 2-phosphate site.

It belongs to the IspF family. In terms of assembly, homotrimer. The cofactor is a divalent metal cation.

The enzyme catalyses 4-CDP-2-C-methyl-D-erythritol 2-phosphate = 2-C-methyl-D-erythritol 2,4-cyclic diphosphate + CMP. It functions in the pathway isoprenoid biosynthesis; isopentenyl diphosphate biosynthesis via DXP pathway; isopentenyl diphosphate from 1-deoxy-D-xylulose 5-phosphate: step 4/6. Functionally, involved in the biosynthesis of isopentenyl diphosphate (IPP) and dimethylallyl diphosphate (DMAPP), two major building blocks of isoprenoid compounds. Catalyzes the conversion of 4-diphosphocytidyl-2-C-methyl-D-erythritol 2-phosphate (CDP-ME2P) to 2-C-methyl-D-erythritol 2,4-cyclodiphosphate (ME-CPP) with a corresponding release of cytidine 5-monophosphate (CMP). The chain is 2-C-methyl-D-erythritol 2,4-cyclodiphosphate synthase from Ehrlichia ruminantium (strain Welgevonden).